Consider the following 398-residue polypeptide: Protein-glutamate methylesterase/protein-glutamine glutaminase (398 aa).

Positions Lys4–Leu121 constitute a Response regulatory domain. A 4-aspartylphosphate modification is found at Asp55. Residues Arg133 to Ser200 are disordered. Composition is skewed to polar residues over residues Arg136–Ile146 and Arg168–Ser200. One can recognise a CheB-type methylesterase domain in the interval Ser205–Gly398. Catalysis depends on residues Ser217, His244, and Asp340.

This sequence belongs to the CheB family. Post-translationally, phosphorylated by CheA. Phosphorylation of the N-terminal regulatory domain activates the methylesterase activity.

Its subcellular location is the cytoplasm. The enzyme catalyses [protein]-L-glutamate 5-O-methyl ester + H2O = L-glutamyl-[protein] + methanol + H(+). It catalyses the reaction L-glutaminyl-[protein] + H2O = L-glutamyl-[protein] + NH4(+). Involved in chemotaxis. Part of a chemotaxis signal transduction system that modulates chemotaxis in response to various stimuli. Catalyzes the demethylation of specific methylglutamate residues introduced into the chemoreceptors (methyl-accepting chemotaxis proteins or MCP) by CheR. Also mediates the irreversible deamidation of specific glutamine residues to glutamic acid. The sequence is that of Protein-glutamate methylesterase/protein-glutamine glutaminase from Shewanella frigidimarina (strain NCIMB 400).